Consider the following 129-residue polypeptide: Large ribosomal subunit protein bL12 (129 aa).

The protein belongs to the bacterial ribosomal protein bL12 family. As to quaternary structure, homodimer. Part of the ribosomal stalk of the 50S ribosomal subunit. Forms a multimeric L10(L12)X complex, where L10 forms an elongated spine to which 2 to 4 L12 dimers bind in a sequential fashion. Binds GTP-bound translation factors.

Functionally, forms part of the ribosomal stalk which helps the ribosome interact with GTP-bound translation factors. Is thus essential for accurate translation. The polypeptide is Large ribosomal subunit protein bL12 (Thermosipho melanesiensis (strain DSM 12029 / CIP 104789 / BI429)).